The following is a 263-amino-acid chain: Oxidoreductase UcpA (263 aa).

10 to 32 (LITGASQGIGEGIARVFARHGAN) is a binding site for NAD(+). Ser141 contacts substrate. Tyr155 acts as the Proton acceptor in catalysis.

This sequence belongs to the short-chain dehydrogenases/reductases (SDR) family.

This chain is Oxidoreductase UcpA (ucpA), found in Salmonella typhi.